Here is a 213-residue protein sequence, read N- to C-terminus: Viral dihydrofolate reductase (213 aa).

In terms of domain architecture, DHFR spans 4-184 (LLNCIVAVDQ…IKYKFEVYEK (181 aa)). Residues Ala10 and 16 to 22 (GIGKKGH) each bind NADP(+). Substrate is bound at residue 31-36 (DFKYFQ). 54-56 (KNT) contributes to the NADP(+) binding site. Arg70 contacts substrate. NADP(+) is bound by residues 76 to 78 (SKK) and 116 to 123 (GGSSVYKD).

This sequence belongs to the dihydrofolate reductase family.

It catalyses the reaction (6S)-5,6,7,8-tetrahydrofolate + NADP(+) = 7,8-dihydrofolate + NADPH + H(+). Its pathway is cofactor biosynthesis; tetrahydrofolate biosynthesis; 5,6,7,8-tetrahydrofolate from 7,8-dihydrofolate: step 1/1. In terms of biological role, key enzyme in folate metabolism. Catalyzes an essential reaction for de novo glycine and purine synthesis, and for DNA precursor synthesis. This Saimiri sciureus (Common squirrel monkey) protein is Viral dihydrofolate reductase (DHFR).